The following is a 266-amino-acid chain: 22 kDa alpha-zein 8 (266 aa).

The signal sequence occupies residues 1–21 (MATKILALLALLALFVSATNA).

Belongs to the zein family.

Functionally, zeins are major seed storage proteins. The sequence is that of 22 kDa alpha-zein 8 from Zea mays (Maize).